Consider the following 59-residue polypeptide: Chromatin protein Cren7 (59 aa).

It belongs to the Cren7 family. As to quaternary structure, monomer. Methylated at multiple sites, to varying extents.

It is found in the chromosome. Its subcellular location is the cytoplasm. Functionally, a chromatin protein, binds double-stranded DNA without sequence specificity. Constrains negative DNA supercoils. This Pyrobaculum neutrophilum (strain DSM 2338 / JCM 9278 / NBRC 100436 / V24Sta) (Thermoproteus neutrophilus) protein is Chromatin protein Cren7.